Consider the following 69-residue polypeptide: Cytochrome c oxidase subunit 8A, mitochondrial (69 aa).

The N-terminal 25 residues, 1–25 (MSVLTPLLLRGLTGSARRLPVPRAQ), are a transit peptide targeting the mitochondrion. The short motif at 2–19 (SVLTPLLLRGLTGSARRL) is the SIFI-degron element. Residues 26 to 36 (VHSMPPEQKLG) lie on the Mitochondrial matrix side of the membrane. Residues 37–60 (VLELAIGFTSCLVTFLLPAGWILS) traverse the membrane as a helical segment. Topologically, residues 61–69 (HLDSYKKRG) are mitochondrial intermembrane.

The protein belongs to the cytochrome c oxidase VIII family. Component of the cytochrome c oxidase (complex IV, CIV), a multisubunit enzyme composed of 14 subunits. The complex is composed of a catalytic core of 3 subunits MT-CO1, MT-CO2 and MT-CO3, encoded in the mitochondrial DNA, and 11 supernumerary subunits COX4I, COX5A, COX5B, COX6A, COX6B, COX6C, COX7A, COX7B, COX7C, COX8 and NDUFA4, which are encoded in the nuclear genome. The complex exists as a monomer or a dimer and forms supercomplexes (SCs) in the inner mitochondrial membrane with NADH-ubiquinone oxidoreductase (complex I, CI) and ubiquinol-cytochrome c oxidoreductase (cytochrome b-c1 complex, complex III, CIII), resulting in different assemblies (supercomplex SCI(1)III(2)IV(1) and megacomplex MCI(2)III(2)IV(2)). In response to mitochondrial stress, the precursor protein is ubiquitinated by the SIFI complex in the cytoplasm before mitochondrial import, leading to its degradation. Within the SIFI complex, UBR4 initiates ubiquitin chain that are further elongated or branched by KCMF1.

The protein localises to the mitochondrion inner membrane. It functions in the pathway energy metabolism; oxidative phosphorylation. Functionally, component of the cytochrome c oxidase, the last enzyme in the mitochondrial electron transport chain which drives oxidative phosphorylation. The respiratory chain contains 3 multisubunit complexes succinate dehydrogenase (complex II, CII), ubiquinol-cytochrome c oxidoreductase (cytochrome b-c1 complex, complex III, CIII) and cytochrome c oxidase (complex IV, CIV), that cooperate to transfer electrons derived from NADH and succinate to molecular oxygen, creating an electrochemical gradient over the inner membrane that drives transmembrane transport and the ATP synthase. Cytochrome c oxidase is the component of the respiratory chain that catalyzes the reduction of oxygen to water. Electrons originating from reduced cytochrome c in the intermembrane space (IMS) are transferred via the dinuclear copper A center (CU(A)) of subunit 2 and heme A of subunit 1 to the active site in subunit 1, a binuclear center (BNC) formed by heme A3 and copper B (CU(B)). The BNC reduces molecular oxygen to 2 water molecules using 4 electrons from cytochrome c in the IMS and 4 protons from the mitochondrial matrix. The sequence is that of Cytochrome c oxidase subunit 8A, mitochondrial (COX8A) from Saimiri sciureus (Common squirrel monkey).